The sequence spans 175 residues: Shikimate kinase (175 aa).

14 to 19 (GAGKST) serves as a coordination point for ATP. Mg(2+) is bound at residue serine 18. Substrate-binding residues include aspartate 36, arginine 60, and glycine 82. Arginine 120 serves as a coordination point for ATP. Position 140 (arginine 140) interacts with substrate. Glutamine 157 is a binding site for ATP.

This sequence belongs to the shikimate kinase family. Monomer. The cofactor is Mg(2+).

It localises to the cytoplasm. It catalyses the reaction shikimate + ATP = 3-phosphoshikimate + ADP + H(+). It participates in metabolic intermediate biosynthesis; chorismate biosynthesis; chorismate from D-erythrose 4-phosphate and phosphoenolpyruvate: step 5/7. Catalyzes the specific phosphorylation of the 3-hydroxyl group of shikimic acid using ATP as a cosubstrate. This Histophilus somni (strain 2336) (Haemophilus somnus) protein is Shikimate kinase.